Reading from the N-terminus, the 732-residue chain is MTLAIVKEVPAGADGDDTTDLVVLSDAAGRMRVRADWVRGNSRRAVAVEEAVAKQDGVRVVHAYPRTGSVVVWYSPRRCDRAAVLEAIGGAKHVAAELIPARAPHSTEIRNTDVLRMVIGGAALALLGVRRYVFARPPLLGPSGRMVATGVTIFTGYPFLRGALRSLRSGKAGTDALVSAATIASLILRENVVALTVLWLLNIGEYLQDLTLRRTRRAISELLRGNQDTAWIRLTDGPEAGTEVQVPIDSVQIGDEVVVHDHVAIPVDGEVVDGEAIVNQSAITGENLPVSVVAGATVHAGSVVVRGRLVVRAQAVGNQTTIGRIITRVEEAQNDRAPIQTVGENFSRRFVPTSFIVSAITLLVTGDVRRAMTMLLIACPCAVGLSTPTAISAAIGNGARRGILIKGGSHLEQAGRVDAIVFDKTGTLTVGRPVVTNIIAMHKDWEPEQVLAYAASSEIHSRHPLAEAVIRSTEERRISIPPHEECEVLVGLGMRTWADGRTLLLGSPSLLESEQVKVSKKASEWVGKLRQQAETPLLLAVDGTLVGLISLRDEVRPEAAEVLTKLRDNGVRRIVMLTGDHPDIAKVVAEELGIDEWRAEVMPEDKLEVVRDLQDEGYVVGMVGDGINDAPALAAADIGIAMGLAGTDVAVETADVALANDDLHRLLDVRDLGGRAVDVIRQNYGMSIAVNAAGLLIGAGGALSPVLAAILHNASSVAVVANSSRLIRYRLE.

Residues 29 to 96 (GRMRVRADWV…AIGGAKHVAA (68 aa)) form the HMA domain. Transmembrane regions (helical) follow at residues 105–123 (HSTEIRNTDVLRMVIGGAA), 146–164 (MVATGVTIFTGYPFLRGAL), 172–186 (AGTDALVSAATIASL), 195–209 (LTVLWLLNIGEYLQD), 342–366 (VGENFSRRFVPTSFIVSAITLLVTG), and 372–390 (MTMLLIACPCAVGLSTPTA). Catalysis depends on D423, which acts as the 4-aspartylphosphate intermediate. Positions 423, 425, and 625 each coordinate Mg(2+). 2 helical membrane passes run 676–695 (AVDVIRQNYGMSIAVNAAGL) and 705–724 (PVLAAILHNASSVAVVANSS).

Belongs to the cation transport ATPase (P-type) (TC 3.A.3) family. Type IB subfamily.

It is found in the cell membrane. It catalyses the reaction Zn(2+)(in) + ATP + H2O = Zn(2+)(out) + ADP + phosphate + H(+). Its function is as follows. Zn(2+) efflux transporter which is involved in detoxification of zinc during infection. The sequence is that of Zinc-exporting P-type ATPase from Mycobacterium marinum (strain ATCC BAA-535 / M).